A 314-amino-acid polypeptide reads, in one-letter code: Methionyl-tRNA formyltransferase (314 aa).

Residue 111-114 participates in (6S)-5,6,7,8-tetrahydrofolate binding; the sequence is SLLP.

It belongs to the Fmt family.

The catalysed reaction is L-methionyl-tRNA(fMet) + (6R)-10-formyltetrahydrofolate = N-formyl-L-methionyl-tRNA(fMet) + (6S)-5,6,7,8-tetrahydrofolate + H(+). Its function is as follows. Attaches a formyl group to the free amino group of methionyl-tRNA(fMet). The formyl group appears to play a dual role in the initiator identity of N-formylmethionyl-tRNA by promoting its recognition by IF2 and preventing the misappropriation of this tRNA by the elongation apparatus. The protein is Methionyl-tRNA formyltransferase of Coxiella burnetii (strain CbuG_Q212) (Coxiella burnetii (strain Q212)).